A 57-amino-acid polypeptide reads, in one-letter code: Protein GnsB (57 aa).

This sequence belongs to the gns family.

Its function is as follows. Overexpression increases levels of unsaturated fatty acids and suppresses both the temperature-sensitive fabA6 mutation and cold-sensitive secG null mutation. The polypeptide is Protein GnsB (gnsB) (Escherichia coli (strain K12)).